Consider the following 313-residue polypeptide: Ribosomal RNA small subunit methyltransferase H (313 aa).

Residues 35–37 (GGH), Asp55, Phe80, Asp102, and Gln109 contribute to the S-adenosyl-L-methionine site.

This sequence belongs to the methyltransferase superfamily. RsmH family.

It localises to the cytoplasm. The enzyme catalyses cytidine(1402) in 16S rRNA + S-adenosyl-L-methionine = N(4)-methylcytidine(1402) in 16S rRNA + S-adenosyl-L-homocysteine + H(+). Its function is as follows. Specifically methylates the N4 position of cytidine in position 1402 (C1402) of 16S rRNA. This chain is Ribosomal RNA small subunit methyltransferase H, found in Shewanella oneidensis (strain ATCC 700550 / JCM 31522 / CIP 106686 / LMG 19005 / NCIMB 14063 / MR-1).